A 426-amino-acid polypeptide reads, in one-letter code: Adenylosuccinate synthetase (426 aa).

Residues 13–19 (GDEGKGK) and 41–43 (GHT) contribute to the GTP site. Catalysis depends on D14, which acts as the Proton acceptor. Mg(2+) contacts are provided by D14 and G41. IMP is bound by residues 14-17 (DEGK), 39-42 (NAGH), T129, R143, Q224, T239, and R303. H42 serves as the catalytic Proton donor. 299-305 (TTTGRPR) contributes to the substrate binding site. GTP is bound by residues R305, 331–333 (KLD), and 414–416 (GTG).

Belongs to the adenylosuccinate synthetase family. In terms of assembly, homodimer. The cofactor is Mg(2+).

It localises to the cytoplasm. The catalysed reaction is IMP + L-aspartate + GTP = N(6)-(1,2-dicarboxyethyl)-AMP + GDP + phosphate + 2 H(+). It functions in the pathway purine metabolism; AMP biosynthesis via de novo pathway; AMP from IMP: step 1/2. In terms of biological role, plays an important role in the de novo pathway of purine nucleotide biosynthesis. Catalyzes the first committed step in the biosynthesis of AMP from IMP. The protein is Adenylosuccinate synthetase of Caldicellulosiruptor bescii (strain ATCC BAA-1888 / DSM 6725 / KCTC 15123 / Z-1320) (Anaerocellum thermophilum).